The sequence spans 155 residues: Small ribosomal subunit protein uS7 (155 aa).

Belongs to the universal ribosomal protein uS7 family. In terms of assembly, part of the 30S ribosomal subunit. Contacts proteins S9 and S11.

Functionally, one of the primary rRNA binding proteins, it binds directly to 16S rRNA where it nucleates assembly of the head domain of the 30S subunit. Is located at the subunit interface close to the decoding center, probably blocks exit of the E-site tRNA. The protein is Small ribosomal subunit protein uS7 of Mycoplasma mycoides subsp. mycoides SC (strain CCUG 32753 / NCTC 10114 / PG1).